A 32-amino-acid chain; its full sequence is Cytochrome b6-f complex subunit 7 (32 aa).

The helical transmembrane segment at 9–27 (AAVFWILIPIGLVGGALLL) threads the bilayer.

This sequence belongs to the PetM family. As to quaternary structure, the 4 large subunits of the cytochrome b6-f complex are cytochrome b6, subunit IV (17 kDa polypeptide, PetD), cytochrome f and the Rieske protein, while the 4 small subunits are PetG, PetL, PetM and PetN. The complex functions as a dimer.

The protein resides in the cellular thylakoid membrane. Its function is as follows. Component of the cytochrome b6-f complex, which mediates electron transfer between photosystem II (PSII) and photosystem I (PSI), cyclic electron flow around PSI, and state transitions. This Prochlorococcus marinus (strain MIT 9515) protein is Cytochrome b6-f complex subunit 7.